We begin with the raw amino-acid sequence, 332 residues long: MAQTWKDTDISLDPIKDQTIAVIGYGIQGDAQANNMKDSGLNVIIGLKEGGNSWKKAEADGHKVMSVADATKQADIIHILIPDMIQGQVYKDEIGPNLSEGKALSFSHAAAIYWKWIEAPNNVDLIMIAPKGPGSKVRETYLDNFGTPAIVAVEQDFTGKAWDRTLGIAKAIGSARAGLIKTAFKEEVETDWFGEQADLCGGAASMVTNAFETLVEAGYQPEIAYFEVLHELKLIVDMIQRYGINGMWRRVSETARYGGLTRGPMVMDSANKENMKKVLTMIQDGTFNNEWISEYQKNGKDAFDKYMKQYDEHQIEKVGKEMRKMMWPDSTE.

A KARI N-terminal Rossmann domain is found at 1 to 182; that stretch reads MAQTWKDTDI…GSARAGLIKT (182 aa). NADP(+) is bound by residues 25-28, K48, S53, and 83-86; these read YGIQ and DMIQ. The active site involves H108. Residue G134 participates in NADP(+) binding. The 147-residue stretch at 183-329 folds into the KARI C-terminal knotted domain; sequence AFKEEVETDW…KEMRKMMWPD (147 aa). Residues D191, E195, E227, and E231 each contribute to the Mg(2+) site. Residue S252 participates in substrate binding.

The protein belongs to the ketol-acid reductoisomerase family. It depends on Mg(2+) as a cofactor.

It catalyses the reaction (2R)-2,3-dihydroxy-3-methylbutanoate + NADP(+) = (2S)-2-acetolactate + NADPH + H(+). It carries out the reaction (2R,3R)-2,3-dihydroxy-3-methylpentanoate + NADP(+) = (S)-2-ethyl-2-hydroxy-3-oxobutanoate + NADPH + H(+). It functions in the pathway amino-acid biosynthesis; L-isoleucine biosynthesis; L-isoleucine from 2-oxobutanoate: step 2/4. Its pathway is amino-acid biosynthesis; L-valine biosynthesis; L-valine from pyruvate: step 2/4. Involved in the biosynthesis of branched-chain amino acids (BCAA). Catalyzes an alkyl-migration followed by a ketol-acid reduction of (S)-2-acetolactate (S2AL) to yield (R)-2,3-dihydroxy-isovalerate. In the isomerase reaction, S2AL is rearranged via a Mg-dependent methyl migration to produce 3-hydroxy-3-methyl-2-ketobutyrate (HMKB). In the reductase reaction, this 2-ketoacid undergoes a metal-dependent reduction by NADPH to yield (R)-2,3-dihydroxy-isovalerate. The polypeptide is Ketol-acid reductoisomerase (NADP(+)) (Nitrosopumilus maritimus (strain SCM1)).